The sequence spans 463 residues: Paraneoplastic antigen Ma3 (463 aa).

The tract at residues 363–410 is disordered; it reads VGAVPLPASGNSFDARPSQGYRRRRGRGQHRRGGVARAGSRGSRKRKR. The segment covering 383–396 has biased composition (basic residues); sequence YRRRRGRGQHRRGG. The segment at 412–429 adopts a CCHC-type zinc-finger fold; the sequence is TFCYSCGEDGHIRVQCIN. Residues 440-463 are disordered; it reads KQAAVESGNGNWAWDKSHPKSKAK.

It belongs to the PNMA family. In terms of tissue distribution, expressed at high levels in the brain and testis. Expressed at lower levels in the heart, trachea and kidney.

It is found in the nucleus. It localises to the nucleolus. The protein is Paraneoplastic antigen Ma3 (PNMA3) of Homo sapiens (Human).